A 249-amino-acid chain; its full sequence is 2-C-methyl-D-erythritol 4-phosphate cytidylyltransferase (249 aa).

This sequence belongs to the IspD/TarI cytidylyltransferase family. IspD subfamily.

It catalyses the reaction 2-C-methyl-D-erythritol 4-phosphate + CTP + H(+) = 4-CDP-2-C-methyl-D-erythritol + diphosphate. The protein operates within isoprenoid biosynthesis; isopentenyl diphosphate biosynthesis via DXP pathway; isopentenyl diphosphate from 1-deoxy-D-xylulose 5-phosphate: step 2/6. In terms of biological role, catalyzes the formation of 4-diphosphocytidyl-2-C-methyl-D-erythritol from CTP and 2-C-methyl-D-erythritol 4-phosphate (MEP). In Shewanella oneidensis (strain ATCC 700550 / JCM 31522 / CIP 106686 / LMG 19005 / NCIMB 14063 / MR-1), this protein is 2-C-methyl-D-erythritol 4-phosphate cytidylyltransferase.